Reading from the N-terminus, the 770-residue chain is Probable methyltransferase PMT24 (770 aa).

Over 1 to 17 the chain is Cytoplasmic; that stretch reads MAMGKYSRVDGKKSSGY. Residues 18–38 form a helical; Signal-anchor for type II membrane protein membrane-spanning segment; the sequence is GLTITIVLIVSLCLVGAWMFM. Over 39–770 the chain is Lumenal; the sequence is SSWSAPTESI…EAETIQSAIA (732 aa). Basic and acidic residues-rich tracts occupy residues 54-81 and 93-164; these read ERTKDVDTTKSDFKSEEVDRGSKSFPDE and NEEK…KSED. Residues 54 to 223 are disordered; it reads ERTKDVDTTK…STGSGAWSTQ (170 aa). Residues Asn160 and Asn166 are each glycosylated (N-linked (GlcNAc...) asparagine). Positions 212–223 are enriched in polar residues; that stretch reads ESSTGSGAWSTQ. N-linked (GlcNAc...) asparagine glycosylation is found at Asn244 and Asn363.

Belongs to the methyltransferase superfamily.

It localises to the golgi apparatus membrane. The polypeptide is Probable methyltransferase PMT24 (Arabidopsis thaliana (Mouse-ear cress)).